We begin with the raw amino-acid sequence, 608 residues long: Thiol:disulfide interchange protein DsbD (608 aa).

Residues 1 to 22 form the signal peptide; it reads MKNLLSLCFLMLAAFTLNPAAA. The cysteines at positions 135 and 141 are disulfide-linked. Residues 161–173 are compositionally biased toward polar residues; that stretch reads SAPSSDAAQQTNE. A disordered region spans residues 161 to 180; it reads SAPSSDAAQQTNEGEVKKSE. Transmembrane regions (helical) follow at residues 194-214, 241-261, 273-293, 314-334, 352-372, 387-407, 414-434, and 456-476; these read LLTL…PCVF, FFYV…VAMA, IVLI…FGVF, GGSI…ASPC, VVLG…PLLI, WMNI…VFLL, VASQ…FYVA, and SLVI…LIYP. Cysteine 212 and cysteine 334 are disulfide-bonded. The Thioredoxin domain occupies 469–608; that stretch reads LAYQLIYPSS…FSAHVKSIFK (140 aa). A disulfide bridge connects residues cysteine 522 and cysteine 525.

This sequence belongs to the thioredoxin family. DsbD subfamily.

It is found in the cell inner membrane. The enzyme catalyses [protein]-dithiol + NAD(+) = [protein]-disulfide + NADH + H(+). The catalysed reaction is [protein]-dithiol + NADP(+) = [protein]-disulfide + NADPH + H(+). Its function is as follows. Required to facilitate the formation of correct disulfide bonds in some periplasmic proteins and for the assembly of the periplasmic c-type cytochromes. Acts by transferring electrons from cytoplasmic thioredoxin to the periplasm. This transfer involves a cascade of disulfide bond formation and reduction steps. This chain is Thiol:disulfide interchange protein DsbD, found in Colwellia psychrerythraea (strain 34H / ATCC BAA-681) (Vibrio psychroerythus).